The following is a 155-amino-acid chain: Ribosome maturation factor RimP (155 aa).

This sequence belongs to the RimP family.

It localises to the cytoplasm. In terms of biological role, required for maturation of 30S ribosomal subunits. In Staphylococcus epidermidis (strain ATCC 35984 / DSM 28319 / BCRC 17069 / CCUG 31568 / BM 3577 / RP62A), this protein is Ribosome maturation factor RimP.